The following is a 778-amino-acid chain: Pentatricopeptide repeat-containing protein At3g09650, chloroplastic (778 aa).

The N-terminal 65 residues, 1–65 (MNILRPPTSS…RSASGTANSS (65 aa)), are a transit peptide targeting the chloroplast. PPR repeat units lie at residues 235–269 (DTAAFNAVLNACANLGDTDKYWKLFEEMSEWDCEP), 270–304 (DVLTYNVMIKLCARVGRKELIVFVLERIIDKGIKV), and 305–339 (CMTTMHSLVAAYVGFGDLRTAERIVQAMREKRRDL). A disordered region spans residues 351–381 (LKEKEEEEAEDDEDAFEDDEDSGYSARDEVS). The segment covering 355 to 372 (EEEEAEDDEDAFEDDEDS) has biased composition (acidic residues). PPR repeat units follow at residues 413–443 (DSRIYTTLMKGYMKNGRVADTARMLEAMRRQ), 451–485 (DEVTYTTVVSAFVNAGLMDRARQVLAEMARMGVPA), 486–521 (NRITYNVLLKGYCKQLQIDRAEDLLREMTEDAGIEP), 522–556 (DVVSYNIIIDGCILIDDSAGALAFFNEMRTRGIAP), 557–587 (TKISYTTLMKAFAMSGQPKLANRVFDEMMND), 593–627 (DLIAWNMLVEGYCRLGLIEDAQRVVSRMKENGFYP), and 628–658 (NVATYGSLANGVSQARKPGDALLLWKEIKER).

It belongs to the PPR family. P subfamily.

The protein localises to the plastid. It localises to the chloroplast stroma. In terms of biological role, involved in the processing of polycistronic chloroplast psbB-psbT-psbH-petB-petD transcript. Could bind RNA. The polypeptide is Pentatricopeptide repeat-containing protein At3g09650, chloroplastic (HCF152) (Arabidopsis thaliana (Mouse-ear cress)).